Consider the following 223-residue polypeptide: Large ribosomal subunit protein bL25 (223 aa).

This sequence belongs to the bacterial ribosomal protein bL25 family. CTC subfamily. In terms of assembly, part of the 50S ribosomal subunit; part of the 5S rRNA/L5/L18/L25 subcomplex. Contacts the 5S rRNA. Binds to the 5S rRNA independently of L5 and L18.

This is one of the proteins that binds to the 5S RNA in the ribosome where it forms part of the central protuberance. The chain is Large ribosomal subunit protein bL25 from Albidiferax ferrireducens (strain ATCC BAA-621 / DSM 15236 / T118) (Rhodoferax ferrireducens).